Reading from the N-terminus, the 192-residue chain is Orotate phosphoribosyltransferase 2 (192 aa).

116–124 contacts 5-phospho-alpha-D-ribose 1-diphosphate; the sequence is EDIVTTGLS. 2 residues coordinate orotate: T120 and R148.

Belongs to the purine/pyrimidine phosphoribosyltransferase family. PyrE subfamily. Homodimer. Mg(2+) is required as a cofactor.

It carries out the reaction orotidine 5'-phosphate + diphosphate = orotate + 5-phospho-alpha-D-ribose 1-diphosphate. The protein operates within pyrimidine metabolism; UMP biosynthesis via de novo pathway; UMP from orotate: step 1/2. Catalyzes the transfer of a ribosyl phosphate group from 5-phosphoribose 1-diphosphate to orotate, leading to the formation of orotidine monophosphate (OMP). This is Orotate phosphoribosyltransferase 2 from Mesorhizobium japonicum (strain LMG 29417 / CECT 9101 / MAFF 303099) (Mesorhizobium loti (strain MAFF 303099)).